We begin with the raw amino-acid sequence, 618 residues long: Glutamine--fructose-6-phosphate aminotransferase [isomerizing] (618 aa).

Cys-2 serves as the catalytic Nucleophile; for GATase activity. Positions Cys-2–Asp-226 constitute a Glutamine amidotransferase type-2 domain. Residues Trp-72 to Asn-91 form a disordered region. 2 SIS domains span residues Asn-295–Lys-434 and Cys-467–Pro-608. The active-site For Fru-6P isomerization activity is Lys-613.

Homodimer.

It is found in the cytoplasm. It carries out the reaction D-fructose 6-phosphate + L-glutamine = D-glucosamine 6-phosphate + L-glutamate. Catalyzes the first step in hexosamine metabolism, converting fructose-6P into glucosamine-6P using glutamine as a nitrogen source. The chain is Glutamine--fructose-6-phosphate aminotransferase [isomerizing] from Methanosarcina mazei (strain ATCC BAA-159 / DSM 3647 / Goe1 / Go1 / JCM 11833 / OCM 88) (Methanosarcina frisia).